Reading from the N-terminus, the 291-residue chain is Beta-lactamase CTX-M-25 (291 aa).

The first 30 residues, 1–30 (MMRKSVRRAMLMTTACVSLLLASVPLCAQA), serve as a signal peptide directing secretion. Serine 73 serves as the catalytic Nucleophile; acyl-ester intermediate. A beta-lactam-binding residues include lysine 76, serine 133, glutamate 169, and serine 240.

This sequence belongs to the class-A beta-lactamase family. As to quaternary structure, monomer.

The protein resides in the secreted. It carries out the reaction a beta-lactam + H2O = a substituted beta-amino acid. With respect to regulation, inhibited by the beta-lactamase-blocking agents clavulanic acid and tazobactam; in the DH10B strain. In terms of biological role, extended-spectrum beta-lactamase (ESBL) which confers resistance to penicillins, as well as first, second and third-generation cephalosporins. Has cefotaxime-hydrolyzing activity. Inactive against cephalosporin antibiotic, cefoxitin, and the carbapenem, imipenem. This is Beta-lactamase CTX-M-25 from Escherichia coli.